Reading from the N-terminus, the 79-residue chain is Small ribosomal subunit protein bS18 (79 aa).

The protein belongs to the bacterial ribosomal protein bS18 family. Part of the 30S ribosomal subunit. Forms a tight heterodimer with protein bS6.

Binds as a heterodimer with protein bS6 to the central domain of the 16S rRNA, where it helps stabilize the platform of the 30S subunit. The chain is Small ribosomal subunit protein bS18 from Afipia carboxidovorans (strain ATCC 49405 / DSM 1227 / KCTC 32145 / OM5) (Oligotropha carboxidovorans).